Consider the following 331-residue polypeptide: Ferredoxin--NADP reductase 2 (331 aa).

FAD-binding residues include Glu-37, Gln-45, Tyr-50, Val-90, Phe-124, Asp-286, and Thr-327.

This sequence belongs to the ferredoxin--NADP reductase type 2 family. Homodimer. The cofactor is FAD.

It catalyses the reaction 2 reduced [2Fe-2S]-[ferredoxin] + NADP(+) + H(+) = 2 oxidized [2Fe-2S]-[ferredoxin] + NADPH. In Listeria innocua serovar 6a (strain ATCC BAA-680 / CLIP 11262), this protein is Ferredoxin--NADP reductase 2.